The following is a 193-amino-acid chain: 7-methyl-GTP pyrophosphatase (193 aa).

The active-site Proton acceptor is the Asp-70.

Belongs to the Maf family. YceF subfamily. The cofactor is a divalent metal cation.

It localises to the cytoplasm. It carries out the reaction N(7)-methyl-GTP + H2O = N(7)-methyl-GMP + diphosphate + H(+). Functionally, nucleoside triphosphate pyrophosphatase that hydrolyzes 7-methyl-GTP (m(7)GTP). May have a dual role in cell division arrest and in preventing the incorporation of modified nucleotides into cellular nucleic acids. In Aliivibrio fischeri (strain ATCC 700601 / ES114) (Vibrio fischeri), this protein is 7-methyl-GTP pyrophosphatase.